The sequence spans 276 residues: ATP synthase subunit delta (276 aa).

It belongs to the ATPase delta chain family. F-type ATPases have 2 components, F(1) - the catalytic core - and F(0) - the membrane proton channel. F(1) has five subunits: alpha(3), beta(3), gamma(1), delta(1), epsilon(1). F(0) has three main subunits: a(1), b(2) and c(10-14). The alpha and beta chains form an alternating ring which encloses part of the gamma chain. F(1) is attached to F(0) by a central stalk formed by the gamma and epsilon chains, while a peripheral stalk is formed by the delta and b chains.

Its subcellular location is the cell membrane. In terms of biological role, f(1)F(0) ATP synthase produces ATP from ADP in the presence of a proton or sodium gradient. F-type ATPases consist of two structural domains, F(1) containing the extramembraneous catalytic core and F(0) containing the membrane proton channel, linked together by a central stalk and a peripheral stalk. During catalysis, ATP synthesis in the catalytic domain of F(1) is coupled via a rotary mechanism of the central stalk subunits to proton translocation. Its function is as follows. This protein is part of the stalk that links CF(0) to CF(1). It either transmits conformational changes from CF(0) to CF(1) or is implicated in proton conduction. This chain is ATP synthase subunit delta, found in Kineococcus radiotolerans (strain ATCC BAA-149 / DSM 14245 / SRS30216).